We begin with the raw amino-acid sequence, 557 residues long: Urocanate hydratase (557 aa).

NAD(+) is bound by residues 53 to 54, Q131, 177 to 179, E197, R202, 243 to 244, 264 to 268, 274 to 275, and Y323; these read GG, GMG, NA, QTSAH, and YL. C411 is a catalytic residue. Residue G493 participates in NAD(+) binding.

This sequence belongs to the urocanase family. NAD(+) serves as cofactor.

Its subcellular location is the cytoplasm. The enzyme catalyses 4-imidazolone-5-propanoate = trans-urocanate + H2O. It participates in amino-acid degradation; L-histidine degradation into L-glutamate; N-formimidoyl-L-glutamate from L-histidine: step 2/3. Its function is as follows. Catalyzes the conversion of urocanate to 4-imidazolone-5-propionate. The protein is Urocanate hydratase of Pseudomonas putida (strain ATCC 700007 / DSM 6899 / JCM 31910 / BCRC 17059 / LMG 24140 / F1).